Reading from the N-terminus, the 208-residue chain is Peptide deformylase 3 (208 aa).

Fe cation is bound by residues Cys-120 and His-162. Glu-163 is a catalytic residue. His-166 is a binding site for Fe cation.

It belongs to the polypeptide deformylase family. Fe(2+) serves as cofactor.

The catalysed reaction is N-terminal N-formyl-L-methionyl-[peptide] + H2O = N-terminal L-methionyl-[peptide] + formate. Its function is as follows. Removes the formyl group from the N-terminal Met of newly synthesized proteins. Requires at least a dipeptide for an efficient rate of reaction. N-terminal L-methionine is a prerequisite for activity but the enzyme has broad specificity at other positions. This is Peptide deformylase 3 from Streptomyces coelicolor (strain ATCC BAA-471 / A3(2) / M145).